We begin with the raw amino-acid sequence, 199 residues long: Octanoyltransferase (199 aa).

The region spanning 27 to 199 is the BPL/LPL catalytic domain; it reads SNSCDELWLL…FVQYFLTQFK (173 aa). Residues 66-73, 133-135, and 146-148 contribute to the substrate site; these read RGGQVTYH, SIG, and GIA. Cys164 (acyl-thioester intermediate) is an active-site residue.

The protein belongs to the LipB family.

The protein localises to the cytoplasm. The catalysed reaction is octanoyl-[ACP] + L-lysyl-[protein] = N(6)-octanoyl-L-lysyl-[protein] + holo-[ACP] + H(+). The protein operates within protein modification; protein lipoylation via endogenous pathway; protein N(6)-(lipoyl)lysine from octanoyl-[acyl-carrier-protein]: step 1/2. In terms of biological role, catalyzes the transfer of endogenously produced octanoic acid from octanoyl-acyl-carrier-protein onto the lipoyl domains of lipoate-dependent enzymes. Lipoyl-ACP can also act as a substrate although octanoyl-ACP is likely to be the physiological substrate. The sequence is that of Octanoyltransferase from Legionella pneumophila (strain Paris).